Here is a 587-residue protein sequence, read N- to C-terminus: Protein FRIGIDA-ESSENTIAL 1 (587 aa).

A C3H1-type zinc finger spans residues lysine 96–glutamate 123. Disordered stretches follow at residues aspartate 264–isoleucine 346, glycine 368–threonine 421, and isoleucine 467–isoleucine 492. Over residues asparagine 294–leucine 304 the composition is skewed to low complexity. Residues alanine 470 to aspartate 479 are compositionally biased toward basic and acidic residues.

In terms of assembly, component of the transcription activator complex FRI-C composed of FRI, FRL1, SUF4, FLX and FES1. Interacts with FLX, (via C-terminus) with FRI (via C-terminus), and with RIN1, a component of the SWR1 chromatin-remodeling complex. In terms of tissue distribution, expressed in root and shoot apices and vasculature.

The protein localises to the nucleus. Functionally, transcriptional activator involved in the FRIGIDA-mediated vernalization pathway, but not in the autonomous flowering pathway. Acts cooperatively with FRI (FRIGIDA) or FRL1 (FRIGIDA-LIKE 1) to promote FLC (FLOWERING LOCUS C) expression. Required for the stabilization of the FRI-C complex. The polypeptide is Protein FRIGIDA-ESSENTIAL 1 (FES1) (Arabidopsis thaliana (Mouse-ear cress)).